Reading from the N-terminus, the 360-residue chain is UPF0283 membrane protein Asuc_0957 (360 aa).

The next 3 membrane-spanning stretches (helical) occupy residues 74-94 (VIAVAVLFLGATVAQSVQWLI), 102-122 (WIYFAFAVVGCSVVGLGLSAL), and 215-235 (AVENGIVVAISPLAIVDMLFL).

This sequence belongs to the UPF0283 family.

It is found in the cell inner membrane. This Actinobacillus succinogenes (strain ATCC 55618 / DSM 22257 / CCUG 43843 / 130Z) protein is UPF0283 membrane protein Asuc_0957.